The sequence spans 95 residues: MRHYEVMIILDPSQDERTVAPSLDKFLEIVRKENGTVEKVDIWGKRRLAYPIAKKEEGIYAVVNLTCESATVLELDRVLNLNDSVMRTKVLRGDK.

This sequence belongs to the bacterial ribosomal protein bS6 family.

In terms of biological role, binds together with bS18 to 16S ribosomal RNA. In Corynebacterium diphtheriae (strain ATCC 700971 / NCTC 13129 / Biotype gravis), this protein is Small ribosomal subunit protein bS6.